Here is a 299-residue protein sequence, read N- to C-terminus: 4-diphosphocytidyl-2-C-methyl-D-erythritol kinase (299 aa).

Lysine 11 is a catalytic residue. 94-104 serves as a coordination point for ATP; it reads PQGGGLGGGSS. Aspartate 136 is an active-site residue.

The protein belongs to the GHMP kinase family. IspE subfamily.

It catalyses the reaction 4-CDP-2-C-methyl-D-erythritol + ATP = 4-CDP-2-C-methyl-D-erythritol 2-phosphate + ADP + H(+). It functions in the pathway isoprenoid biosynthesis; isopentenyl diphosphate biosynthesis via DXP pathway; isopentenyl diphosphate from 1-deoxy-D-xylulose 5-phosphate: step 3/6. Functionally, catalyzes the phosphorylation of the position 2 hydroxy group of 4-diphosphocytidyl-2C-methyl-D-erythritol. This is 4-diphosphocytidyl-2-C-methyl-D-erythritol kinase from Bordetella pertussis (strain Tohama I / ATCC BAA-589 / NCTC 13251).